A 280-amino-acid chain; its full sequence is Manganese transport system membrane protein MntC (280 aa).

The next 9 membrane-spanning stretches (helical) occupy residues 16–36 (ALITSVTVGIVSGVIGSFIIL), 41–61 (LMGDAISHAVLPGVAISYMMG), 62–82 (MNFFIGAATFGIAAALGIGFV), 92–112 (TAIGIVFSAFFALGIILISFA), 137–157 (TIIIAILVISLVAIFYKEFLV), 168–188 (YGLNVRFLHYFLMLLLTLVTV), 193–213 (TVGIILVVAMLITPAATAYLL), 221–241 (IMLASTFGAVSAIIGLYFSYI), and 244–264 (LASGAAMVLVATIIFFIAFLF).

The protein belongs to the ABC-3 integral membrane protein family.

Its subcellular location is the cell membrane. Its function is as follows. This protein is probably a component of a manganese permease, a binding protein-dependent, ATP-driven transport system. The protein is Manganese transport system membrane protein MntC (mntC) of Listeria innocua serovar 6a (strain ATCC BAA-680 / CLIP 11262).